The following is a 211-amino-acid chain: GTP-binding protein ypt5 (211 aa).

Residue 21-28 (GDSAVGKS) participates in GTP binding. An Effector region motif is present at residues 43–51 (RESTIGAAF). GTP-binding positions include 70-74 (DTAGQ) and 128-131 (NKLD). Residues cysteine 209 and cysteine 211 are each lipidated (S-geranylgeranyl cysteine). Position 211 is a cysteine methyl ester (cysteine 211).

Belongs to the small GTPase superfamily. Rab family.

Its subcellular location is the cell membrane. Its function is as follows. Protein transport. Probably involved in vesicular traffic. In Schizosaccharomyces pombe (strain 972 / ATCC 24843) (Fission yeast), this protein is GTP-binding protein ypt5 (ypt5).